The primary structure comprises 125 residues: Small ribosomal subunit protein eS6 (125 aa).

The protein belongs to the eukaryotic ribosomal protein eS6 family.

The sequence is that of Small ribosomal subunit protein eS6 from Pyrococcus horikoshii (strain ATCC 700860 / DSM 12428 / JCM 9974 / NBRC 100139 / OT-3).